We begin with the raw amino-acid sequence, 789 residues long: SWI5-dependent HO expression protein 4 (789 aa).

Position 18 is a phosphoserine (Ser18).

The protein resides in the cytoplasm. Required for mother cell-specific ho expression. Might be required for the transport of factors (such as ASH1) that promote HO repression from the mother cell into its bud. The polypeptide is SWI5-dependent HO expression protein 4 (SHE4) (Saccharomyces cerevisiae (strain ATCC 204508 / S288c) (Baker's yeast)).